The following is a 423-amino-acid chain: Glutamate-1-semialdehyde 2,1-aminomutase (423 aa).

Residue Lys258 is modified to N6-(pyridoxal phosphate)lysine.

It belongs to the class-III pyridoxal-phosphate-dependent aminotransferase family. HemL subfamily. Requires pyridoxal 5'-phosphate as cofactor.

The protein localises to the cytoplasm. The enzyme catalyses (S)-4-amino-5-oxopentanoate = 5-aminolevulinate. Its pathway is porphyrin-containing compound metabolism; protoporphyrin-IX biosynthesis; 5-aminolevulinate from L-glutamyl-tRNA(Glu): step 2/2. The polypeptide is Glutamate-1-semialdehyde 2,1-aminomutase (Pyrobaculum arsenaticum (strain DSM 13514 / JCM 11321 / PZ6)).